Here is a 126-residue protein sequence, read N- to C-terminus: Histone H2B type 1-C/E/G (126 aa).

Residues 1 to 12 are compositionally biased toward low complexity; the sequence is MPEPAKSAPAPK. Residues 1-36 are disordered; the sequence is MPEPAKSAPAPKKGSKKAVTKAQKKDGKKRKRSRKE. Residue Pro2 is modified to N-acetylproline. Glu3 carries the ADP-ribosyl glutamic acid modification. Lys6 carries the post-translational modification N6-(2-hydroxyisobutyryl)lysine; alternate. Lys6 carries the N6-(beta-hydroxybutyryl)lysine; alternate modification. Lys6 carries the N6-acetyllysine; alternate modification. An N6-butyryllysine; alternate modification is found at Lys6. Lys6 is modified (N6-crotonyllysine; alternate). Position 6 is an N6-lactoyllysine; alternate (Lys6). A Glycyl lysine isopeptide (Lys-Gly) (interchain with G-Cter in SUMO2); alternate cross-link involves residue Lys6. The residue at position 7 (Ser7) is an ADP-ribosylserine. Residue Lys12 is modified to N6-(beta-hydroxybutyryl)lysine; alternate. N6-acetyllysine; alternate occurs at positions 12 and 13. N6-crotonyllysine; alternate occurs at positions 12 and 13. Residue Lys12 is modified to N6-lactoyllysine; alternate. Position 13 is an N6-(2-hydroxyisobutyryl)lysine; alternate (Lys13). Ser15 bears the Phosphoserine; by STK4/MST1 mark. 4 positions are modified to N6-acetyllysine; alternate: Lys16, Lys17, Lys21, and Lys24. 4 positions are modified to N6-crotonyllysine; alternate: Lys16, Lys17, Lys21, and Lys24. N6-lactoyllysine; alternate occurs at positions 16, 17, 21, and 24. At Lys17 the chain carries N6-glutaryllysine; alternate. N6-(2-hydroxyisobutyryl)lysine; alternate is present on residues Lys21 and Lys24. Lys21 bears the N6-(beta-hydroxybutyryl)lysine; alternate mark. N6-butyryllysine; alternate is present on Lys21. Residue Lys21 forms a Glycyl lysine isopeptide (Lys-Gly) (interchain with G-Cter in SUMO2); alternate linkage. Lys25 carries the post-translational modification N6-(2-hydroxyisobutyryl)lysine. At Lys35 the chain carries N6-(2-hydroxyisobutyryl)lysine; alternate. At Lys35 the chain carries N6-(beta-hydroxybutyryl)lysine; alternate. Residue Lys35 is modified to N6-crotonyllysine; alternate. Lys35 carries the post-translational modification N6-glutaryllysine; alternate. N6-succinyllysine; alternate is present on Lys35. Lys35 participates in a covalent cross-link: Glycyl lysine isopeptide (Lys-Gly) (interchain with G-Cter in ubiquitin); alternate. Glu36 is subject to PolyADP-ribosyl glutamic acid. Residue Ser37 is modified to Phosphoserine; by AMPK. N6-(2-hydroxyisobutyryl)lysine; alternate is present on residues Lys44, Lys47, and Lys58. Lys44 is modified (N6-lactoyllysine; alternate). 2 positions are modified to N6-glutaryllysine; alternate: Lys44 and Lys47. Lys47 is subject to N6-methyllysine; alternate. N6,N6-dimethyllysine; alternate is present on Lys58. Dimethylated arginine is present on Arg80. An N6-(2-hydroxyisobutyryl)lysine; alternate modification is found at Lys86. Lys86 carries the N6-acetyllysine; alternate modification. Lys86 carries the post-translational modification N6-lactoyllysine; alternate. At Lys86 the chain carries N6,N6,N6-trimethyllysine; alternate. Residues Arg87 and Arg93 each carry the omega-N-methylarginine modification. Lys109 is modified (N6-(2-hydroxyisobutyryl)lysine; alternate). The residue at position 109 (Lys109) is an N6-(beta-hydroxybutyryl)lysine; alternate. Lys109 bears the N6-lactoyllysine; alternate mark. Lys109 is modified (N6-glutaryllysine; alternate). Lys109 carries the N6-methyllysine; alternate modification. The O-linked (GlcNAc) serine glycan is linked to Ser113. Thr116 carries the phosphothreonine modification. Residues Lys117 and Lys121 each carry the N6-(2-hydroxyisobutyryl)lysine; alternate modification. At Lys117 the chain carries N6-(beta-hydroxybutyryl)lysine; alternate. Residues Lys117 and Lys121 each carry the N6-lactoyllysine; alternate modification. 2 positions are modified to N6-glutaryllysine; alternate: Lys117 and Lys121. 2 positions are modified to N6-succinyllysine; alternate: Lys117 and Lys121. Lys117 is subject to N6-methylated lysine; alternate. Lys121 participates in a covalent cross-link: Glycyl lysine isopeptide (Lys-Gly) (interchain with G-Cter in ubiquitin); alternate.

Belongs to the histone H2B family. As to quaternary structure, the nucleosome is a histone octamer containing two molecules each of H2A, H2B, H3 and H4 assembled in one H3-H4 heterotetramer and two H2A-H2B heterodimers. The octamer wraps approximately 147 bp of DNA. Interacts with VRK1; the interaction is mediated by the nucleosome acidic patch, a cluster of negatively charged residues of H2A and H2B forming a cleft within the nucleosome core. Monoubiquitination at Lys-35 (H2BK34Ub) by the MSL1/MSL2 dimer is required for histone H3 'Lys-4' (H3K4me) and 'Lys-79' (H3K79me) methylation and transcription activation at specific gene loci, such as HOXA9 and MEIS1 loci. Similarly, monoubiquitination at Lys-121 (H2BK120Ub) by the RNF20/40 complex gives a specific tag for epigenetic transcriptional activation and is also prerequisite for histone H3 'Lys-4' and 'Lys-79' methylation. It also functions cooperatively with the FACT dimer to stimulate elongation by RNA polymerase II. H2BK120Ub also acts as a regulator of mRNA splicing: deubiquitination by USP49 is required for efficient cotranscriptional splicing of a large set of exons. Post-translationally, phosphorylated on Ser-15 (H2BS14ph) by STK4/MST1 during apoptosis; which facilitates apoptotic chromatin condensation. Also phosphorylated on Ser-15 in response to DNA double strand breaks (DSBs), and in correlation with somatic hypermutation and immunoglobulin class-switch recombination. Phosphorylation at Ser-37 (H2BS36ph) by AMPK in response to stress promotes transcription. In terms of processing, glcNAcylation at Ser-113 promotes monoubiquitination of Lys-121. It fluctuates in response to extracellular glucose, and associates with transcribed genes. ADP-ribosylated by PARP1 or PARP2 on Ser-7 (H2BS6ADPr) in response to DNA damage. H2BS6ADPr promotes recruitment of CHD1L. Mono-ADP-ribosylated on Glu-3 (H2BE2ADPr) by PARP3 in response to single-strand breaks. Poly ADP-ribosylation on Glu-36 (H2BE35ADPr) by PARP1 regulates adipogenesis: it inhibits phosphorylation at Ser-37 (H2BS36ph), thereby blocking expression of pro-adipogenetic genes. Post-translationally, crotonylation (Kcr) is specifically present in male germ cells and marks testis-specific genes in post-meiotic cells, including X-linked genes that escape sex chromosome inactivation in haploid cells. Crotonylation marks active promoters and enhancers and confers resistance to transcriptional repressors. It is also associated with post-meiotically activated genes on autosomes. In terms of processing, hydroxybutyrylation of histones is induced by starvation. Lactylated in macrophages by EP300/P300 by using lactoyl-CoA directly derived from endogenous or exogenous lactate, leading to stimulates gene transcription.

It localises to the nucleus. Its subcellular location is the chromosome. In terms of biological role, core component of nucleosome. Nucleosomes wrap and compact DNA into chromatin, limiting DNA accessibility to the cellular machineries which require DNA as a template. Histones thereby play a central role in transcription regulation, DNA repair, DNA replication and chromosomal stability. DNA accessibility is regulated via a complex set of post-translational modifications of histones, also called histone code, and nucleosome remodeling. The protein is Histone H2B type 1-C/E/G of Mus musculus (Mouse).